Consider the following 140-residue polypeptide: Small ribosomal subunit protein uS12 (140 aa).

A disordered region spans residues 33–55 (KEQTNVSSPQKRGVCTRVGTMTP). At aspartate 102 the chain carries 3-methylthioaspartic acid.

This sequence belongs to the universal ribosomal protein uS12 family. Part of the 30S ribosomal subunit. Contacts proteins S8 and S17. May interact with IF1 in the 30S initiation complex.

In terms of biological role, with S4 and S5 plays an important role in translational accuracy. Its function is as follows. Interacts with and stabilizes bases of the 16S rRNA that are involved in tRNA selection in the A site and with the mRNA backbone. Located at the interface of the 30S and 50S subunits, it traverses the body of the 30S subunit contacting proteins on the other side and probably holding the rRNA structure together. The combined cluster of proteins S8, S12 and S17 appears to hold together the shoulder and platform of the 30S subunit. The polypeptide is Small ribosomal subunit protein uS12 (Geobacillus thermodenitrificans (strain NG80-2)).